The following is a 326-amino-acid chain: uncharacterized protein (326 aa).

Solcar repeat units lie at residues 15–106, 114–215, and 234–322; these read EFLV…VRRV, ETHA…ATDF, and LKTW…SKAL. A run of 6 helical transmembrane segments spans residues 16 to 36, 83 to 103, 120 to 140, 191 to 211, 240 to 260, and 294 to 314; these read FLVKSGIAGGTAGCVAKSVVA, TATLYRVFPYAGIKFVAYEQV, FLSGSLAGTCSVFFTYPLELI, FSVTLTGIFPYAGMSFLAYDL, LLCGAFAGVCGQTVSYPFEVC, and FFVGLTIGYIKVIPMVSTSFF.

It belongs to the mitochondrial carrier (TC 2.A.29) family.

The protein resides in the mitochondrion inner membrane. This is an uncharacterized protein from Schizosaccharomyces pombe (strain 972 / ATCC 24843) (Fission yeast).